The chain runs to 159 residues: SsrA-binding protein (159 aa).

The interval 134-159 is disordered; it reads KLHDKRETSKERDWNRQKNRLLKERG. Over residues 137 to 159 the composition is skewed to basic and acidic residues; it reads DKRETSKERDWNRQKNRLLKERG.

Belongs to the SmpB family.

The protein resides in the cytoplasm. Its function is as follows. Required for rescue of stalled ribosomes mediated by trans-translation. Binds to transfer-messenger RNA (tmRNA), required for stable association of tmRNA with ribosomes. tmRNA and SmpB together mimic tRNA shape, replacing the anticodon stem-loop with SmpB. tmRNA is encoded by the ssrA gene; the 2 termini fold to resemble tRNA(Ala) and it encodes a 'tag peptide', a short internal open reading frame. During trans-translation Ala-aminoacylated tmRNA acts like a tRNA, entering the A-site of stalled ribosomes, displacing the stalled mRNA. The ribosome then switches to translate the ORF on the tmRNA; the nascent peptide is terminated with the 'tag peptide' encoded by the tmRNA and targeted for degradation. The ribosome is freed to recommence translation, which seems to be the essential function of trans-translation. This is SsrA-binding protein from Sinorhizobium fredii (strain NBRC 101917 / NGR234).